Reading from the N-terminus, the 305-residue chain is MTEPRRRWTAAEDALLWDLYQVQEKAPTGKCQKINWNEIARHIPGRTNKDCRKRYYNRFTGGLRKGSWTQEEDERLFRLVERYQYRWATIAQKMETRNADQCSKRWHHCLNPELERSPWTVDENMLLLSAVNTHGSSWKDIQKCHFPTRSANNIKNQYTILSRKNISLAPAHLHPCCDSPSPSKSSRRPPSTPTSTPQVPGSRQGSSYDPYDYGSLSSTPQLSATDYLPATPEAPAVNFDMAMGAFGDSCGYMPQYQPSPSFYANSPDGSELMMPETMGMRMRYDFRDGLEQEGVRYPGQETFGY.

3 Myb-like domains span residues 5 to 59 (RRRW…YNRF), 60 to 110 (TGGL…HHCL), and 111 to 162 (NPEL…TILS). Residues 175-215 (PCCDSPSPSKSSRRPPSTPTSTPQVPGSRQGSSYDPYDYGS) form a disordered region. The span at 198–207 (QVPGSRQGSS) shows a compositional bias: polar residues.

It is found in the nucleus. In terms of biological role, transcription regulator that acts as a central regulatory node for the integration of external bacterial signals leading to the regulation of secondary metabolite gene clusters such as orsellinic, lecanoric acid, cichorine, 2,4-dihydroxy-3-methyl-6-(2-oxopropyl)benzaldehyde (dba), emericellamide or microperfuranone clusters. In Emericella nidulans (strain FGSC A4 / ATCC 38163 / CBS 112.46 / NRRL 194 / M139) (Aspergillus nidulans), this protein is Myb-like transcriptional regulator basR.